Consider the following 603-residue polypeptide: Elongation factor 4 (603 aa).

Residues 2 to 184 (NHIRNFSIIA…AVVALIPAPK (183 aa)) enclose the tr-type G domain. GTP-binding positions include 14-19 (DHGKST) and 131-134 (NKMD).

Belongs to the TRAFAC class translation factor GTPase superfamily. Classic translation factor GTPase family. LepA subfamily.

It localises to the cell inner membrane. It carries out the reaction GTP + H2O = GDP + phosphate + H(+). In terms of biological role, required for accurate and efficient protein synthesis under certain stress conditions. May act as a fidelity factor of the translation reaction, by catalyzing a one-codon backward translocation of tRNAs on improperly translocated ribosomes. Back-translocation proceeds from a post-translocation (POST) complex to a pre-translocation (PRE) complex, thus giving elongation factor G a second chance to translocate the tRNAs correctly. Binds to ribosomes in a GTP-dependent manner. This is Elongation factor 4 from Polaromonas naphthalenivorans (strain CJ2).